A 438-amino-acid chain; its full sequence is Innexin inx7 (438 aa).

Residues 1–23 (MLNTFSSVRQYLKFDLTRVVIDN) are Cytoplasmic-facing. A helical membrane pass occupies residues 24–44 (IVFKLHYRWTFVILLVATLLI). Over 45 to 58 (TSRQYIGEHIQCLS) the chain is Extracellular. A helical membrane pass occupies residues 59-79 (DGVVSPVINTFCFFTPTFTVV). The Cytoplasmic portion of the chain corresponds to 80-112 (RDQNQTAYRPGSEPPGIGAFDPEKDTIKRHAYY). Residues 113 to 133 (QWVPFVLFFQALCFYIPHALW) traverse the membrane as a helical segment. Over 134 to 283 (KSWEGGRIKA…VMALNIMNEK (150 aa)) the chain is Extracellular. The chain crosses the membrane as a helical span at residues 284–304 (IYIILWFWYAFLLIVTVLGLL). The Cytoplasmic portion of the chain corresponds to 305 to 438 (WRILTLCFYR…STSDMAKLPV (134 aa)). Disordered regions lie at residues 381–402 (NDVN…PELS) and 415–438 (RRNG…KLPV). Residues 418-431 (GSPSAGGAQGPSTS) show a composition bias toward low complexity.

The protein belongs to the pannexin family. In terms of tissue distribution, expressed around gut lobes in embryonic stages 15-17.

Its subcellular location is the cell membrane. The protein localises to the cell junction. It localises to the gap junction. In terms of biological role, structural components of the gap junctions. The sequence is that of Innexin inx7 (Inx7) from Drosophila melanogaster (Fruit fly).